We begin with the raw amino-acid sequence, 215 residues long: Ribonuclease T (215 aa).

The 175-residue stretch at 20 to 194 (VVIDVETAGF…YDTLQTAKLF (175 aa)) folds into the Exonuclease domain. 4 residues coordinate Mg(2+): Asp23, Glu25, His181, and Asp186. The active-site Proton donor/acceptor is His181.

The protein belongs to the RNase T family. In terms of assembly, homodimer. Mg(2+) serves as cofactor.

Functionally, trims short 3' overhangs of a variety of RNA species, leaving a one or two nucleotide 3' overhang. Responsible for the end-turnover of tRNA: specifically removes the terminal AMP residue from uncharged tRNA (tRNA-C-C-A). Also appears to be involved in tRNA biosynthesis. This chain is Ribonuclease T, found in Yersinia pseudotuberculosis serotype O:1b (strain IP 31758).